The chain runs to 213 residues: GTP cyclohydrolase 1 (213 aa).

The Zn(2+) site is built by C104, H107, and C175.

The protein belongs to the GTP cyclohydrolase I family. Toroid-shaped homodecamer, composed of two pentamers of five dimers.

The enzyme catalyses GTP + H2O = 7,8-dihydroneopterin 3'-triphosphate + formate + H(+). Its pathway is cofactor biosynthesis; 7,8-dihydroneopterin triphosphate biosynthesis; 7,8-dihydroneopterin triphosphate from GTP: step 1/1. This chain is GTP cyclohydrolase 1, found in Brucella abortus (strain 2308).